Reading from the N-terminus, the 250-residue chain is 2,3-bisphosphoglycerate-dependent phosphoglycerate mutase (250 aa).

Substrate-binding positions include 10-17, 23-24, Arg-62, 89-92, Lys-100, 116-117, and 185-186; these read RHGESQWN, TG, ERHY, RR, and GN. His-11 functions as the Tele-phosphohistidine intermediate in the catalytic mechanism. Catalysis depends on Glu-89, which acts as the Proton donor/acceptor.

This sequence belongs to the phosphoglycerate mutase family. BPG-dependent PGAM subfamily. Homodimer.

The enzyme catalyses (2R)-2-phosphoglycerate = (2R)-3-phosphoglycerate. Its pathway is carbohydrate degradation; glycolysis; pyruvate from D-glyceraldehyde 3-phosphate: step 3/5. In terms of biological role, catalyzes the interconversion of 2-phosphoglycerate and 3-phosphoglycerate. The polypeptide is 2,3-bisphosphoglycerate-dependent phosphoglycerate mutase (Klebsiella pneumoniae (strain 342)).